The following is a 244-amino-acid chain: tRNA (guanine-N(7)-)-methyltransferase (244 aa).

Residues 1 to 10 show a composition bias toward polar residues; sequence MSDTPQSPAQ. A disordered region spans residues 1-20; that stretch reads MSDTPQSPAQDSLAEHDEAR. S-adenosyl-L-methionine-binding residues include Glu74, Glu99, Asp126, and Asp149. The active site involves Asp149. Residues Lys153, Asp185, and 222 to 225 each bind substrate; that span reads TKFE.

The protein belongs to the class I-like SAM-binding methyltransferase superfamily. TrmB family.

The catalysed reaction is guanosine(46) in tRNA + S-adenosyl-L-methionine = N(7)-methylguanosine(46) in tRNA + S-adenosyl-L-homocysteine. It functions in the pathway tRNA modification; N(7)-methylguanine-tRNA biosynthesis. In terms of biological role, catalyzes the formation of N(7)-methylguanine at position 46 (m7G46) in tRNA. The sequence is that of tRNA (guanine-N(7)-)-methyltransferase from Pseudomonas paraeruginosa (strain DSM 24068 / PA7) (Pseudomonas aeruginosa (strain PA7)).